The primary structure comprises 420 residues: Threonine aspartase 1 (420 aa).

Positions 1–25 (MIMEKGMNSGEGLPSRSSQASAAKV) are disordered. Thr-234 (nucleophile) is an active-site residue.

This sequence belongs to the Ntn-hydrolase family. As to quaternary structure, intramolecular proteolysis generates 2 subunits, alpha and beta, which reassemble through a non-covalent association to form the fully active enzyme.

In terms of biological role, protease responsible for KMT2A/MLL1 and KMT2D/MLL2 processing and activation. Through substrate activation, it controls the expression of HOXA genes, and the expression of key cell cycle regulators including CCNA1, CCNB1, CCNE1 and CDKN2A. This is Threonine aspartase 1 (Tasp1) from Mus musculus (Mouse).